A 379-amino-acid polypeptide reads, in one-letter code: NADH-quinone oxidoreductase subunit D 1 (379 aa).

The protein belongs to the complex I 49 kDa subunit family. As to quaternary structure, NDH-1 is composed of 14 different subunits. Subunits NuoB, C, D, E, F, and G constitute the peripheral sector of the complex.

Its subcellular location is the cell inner membrane. It carries out the reaction a quinone + NADH + 5 H(+)(in) = a quinol + NAD(+) + 4 H(+)(out). In terms of biological role, NDH-1 shuttles electrons from NADH, via FMN and iron-sulfur (Fe-S) centers, to quinones in the respiratory chain. The immediate electron acceptor for the enzyme in this species is believed to be ubiquinone. Couples the redox reaction to proton translocation (for every two electrons transferred, four hydrogen ions are translocated across the cytoplasmic membrane), and thus conserves the redox energy in a proton gradient. The polypeptide is NADH-quinone oxidoreductase subunit D 1 (Anaeromyxobacter sp. (strain K)).